The following is a 101-amino-acid chain: MERFVLKFLLIDKVIAVCLDQKISNERLNPLTEYFFWPQRDAWEDMKNFIDNNDWIDPKDAVNILNRITEVINFWEESAQLKKEDIKNLNIKFPDCVFIVM.

This sequence belongs to the chloroplast-specific ribosomal protein cS23 family. In terms of assembly, part of the 30S ribosomal subunit.

It localises to the plastid. It is found in the chloroplast. Probably a ribosomal protein or a ribosome-associated protein. In Euglena mutabilis, this protein is Small ribosomal subunit protein cS23 (ycf65).